Here is a 495-residue protein sequence, read N- to C-terminus: Pentatricopeptide repeat-containing protein PPR5 homolog, chloroplastic (495 aa).

Positions 1–24 (MLAYPTTSSPWPPRHHGAAAAPAA) are disordered. The N-terminal 29 residues, 1-29 (MLAYPTTSSPWPPRHHGAAAAPAARRHMA), are a transit peptide targeting the chloroplast. 9 PPR repeats span residues 120 to 154 (DNGI…GCRP), 155 to 189 (DTSV…MKTI), 195 to 229 (NIVT…PVSP), 230 to 264 (DIYT…QCRP), 265 to 299 (DVIT…KEKP), 300 to 334 (THPT…GFKP), 335 to 365 (NYVT…LVSS), 370 to 404 (HLSS…GAVP), and 405 to 439 (SAST…GIVP). The disordered stretch occupies residues 455–495 (DKKPRTVPSKNSASKPDVESANNSGTDTSSKPNLSVWQVAA). Over residues 462–495 (PSKNSASKPDVESANNSGTDTSSKPNLSVWQVAA) the composition is skewed to polar residues.

This sequence belongs to the PPR family. P subfamily.

It localises to the plastid. The protein resides in the chloroplast. In terms of biological role, involved in the biogenesis of the plastid translation machinery by promoting the splicing of group II introns in chloroplasts. The chain is Pentatricopeptide repeat-containing protein PPR5 homolog, chloroplastic from Oryza sativa subsp. japonica (Rice).